The chain runs to 94 residues: Small ribosomal subunit protein bS20 (94 aa).

The protein belongs to the bacterial ribosomal protein bS20 family.

Binds directly to 16S ribosomal RNA. This Acaryochloris marina (strain MBIC 11017) protein is Small ribosomal subunit protein bS20.